The chain runs to 506 residues: Lysine--tRNA ligase (506 aa).

Mg(2+)-binding residues include Glu416 and Glu423.

The protein belongs to the class-II aminoacyl-tRNA synthetase family. As to quaternary structure, homodimer. Requires Mg(2+) as cofactor.

The protein resides in the cytoplasm. The catalysed reaction is tRNA(Lys) + L-lysine + ATP = L-lysyl-tRNA(Lys) + AMP + diphosphate. The polypeptide is Lysine--tRNA ligase (Bordetella parapertussis (strain 12822 / ATCC BAA-587 / NCTC 13253)).